The primary structure comprises 692 residues: Zinc finger protein 180 (692 aa).

The region spanning 72-145 (VNFKIVTVDF…GVKIERFTRD (74 aa)) is the KRAB domain. Residues K138, K159, K168, K191, K198, K226, K304, K313, and K330 each participate in a glycyl lysine isopeptide (Lys-Gly) (interchain with G-Cter in SUMO2) cross-link. 12 consecutive C2H2-type zinc fingers follow at residues 353–375 (FECNQCGKSFSWSSHLVAHQRTH), 381–403 (YECSECGKSFSRSSHLVSHQRTH), 409–431 (YRCNQCGKSFSQSYVLVVHQRTH), 437–459 (YECNQCGKSFRQSYKLIAHQRTH), 465–487 (YECNQCGKSFIQSYKLIAHQRIH), 493–515 (YECNQCGKSFSQSYKLVAHQRTH), 521–543 (FECNQCGKSFSWSSQLVAHQRTH), 549–571 (YECSECGKSFNRSSHLVMHQRIH), 577–599 (YECNQCGKSFSQSYVLVVHQRTH), 605–627 (YECSQCGKSFRQSSCLTQHQRTH), 633–655 (FECNQCGKTFSLSARLIVHQRTH), and 661–683 (FTCIQCGKAFINSYKLIRHQATH).

Belongs to the krueppel C2H2-type zinc-finger protein family.

The protein resides in the nucleus. May be involved in transcriptional regulation. The polypeptide is Zinc finger protein 180 (ZNF180) (Homo sapiens (Human)).